Here is a 208-residue protein sequence, read N- to C-terminus: Octanoyltransferase (208 aa).

One can recognise a BPL/LPL catalytic domain in the interval 30–208; sequence GTASEAVFIL…ILKQEFYKIF (179 aa). Substrate contacts are provided by residues 69 to 76, 142 to 144, and 155 to 157; these read RGGKFTYH, SIG, and GVA. The active-site Acyl-thioester intermediate is the cysteine 173.

Belongs to the LipB family.

Its subcellular location is the cytoplasm. The enzyme catalyses octanoyl-[ACP] + L-lysyl-[protein] = N(6)-octanoyl-L-lysyl-[protein] + holo-[ACP] + H(+). Its pathway is protein modification; protein lipoylation via endogenous pathway; protein N(6)-(lipoyl)lysine from octanoyl-[acyl-carrier-protein]: step 1/2. Catalyzes the transfer of endogenously produced octanoic acid from octanoyl-acyl-carrier-protein onto the lipoyl domains of lipoate-dependent enzymes. Lipoyl-ACP can also act as a substrate although octanoyl-ACP is likely to be the physiological substrate. This chain is Octanoyltransferase, found in Orientia tsutsugamushi (strain Ikeda) (Rickettsia tsutsugamushi).